The chain runs to 122 residues: Large ribosomal subunit protein eL31 (122 aa).

It belongs to the eukaryotic ribosomal protein eL31 family.

In Caenorhabditis elegans, this protein is Large ribosomal subunit protein eL31.